The following is a 311-amino-acid chain: DNA-directed RNA polymerase subunit alpha (311 aa).

An alpha N-terminal domain (alpha-NTD) region spans residues methionine 1–threonine 226. The alpha C-terminal domain (alpha-CTD) stretch occupies residues aspartate 243–lysine 311.

The protein belongs to the RNA polymerase alpha chain family. Homodimer. The RNAP catalytic core consists of 2 alpha, 1 beta, 1 beta' and 1 omega subunit. When a sigma factor is associated with the core the holoenzyme is formed, which can initiate transcription.

It carries out the reaction RNA(n) + a ribonucleoside 5'-triphosphate = RNA(n+1) + diphosphate. Functionally, DNA-dependent RNA polymerase catalyzes the transcription of DNA into RNA using the four ribonucleoside triphosphates as substrates. The sequence is that of DNA-directed RNA polymerase subunit alpha from Streptococcus pneumoniae serotype 4 (strain ATCC BAA-334 / TIGR4).